Reading from the N-terminus, the 400-residue chain is Phosphoglycerate kinase (400 aa).

Substrate contacts are provided by residues 24–26, arginine 40, 63–66, arginine 121, and arginine 154; these read DFN and HFGR. Residues lysine 205, glycine 296, glutamate 327, and 356–359 contribute to the ATP site; that span reads GGDS.

This sequence belongs to the phosphoglycerate kinase family. Monomer.

Its subcellular location is the cytoplasm. The catalysed reaction is (2R)-3-phosphoglycerate + ATP = (2R)-3-phospho-glyceroyl phosphate + ADP. It participates in carbohydrate degradation; glycolysis; pyruvate from D-glyceraldehyde 3-phosphate: step 2/5. The protein is Phosphoglycerate kinase of Nostoc punctiforme (strain ATCC 29133 / PCC 73102).